Consider the following 540-residue polypeptide: Type II methyltransferase M.AccI (540 aa).

It belongs to the N(4)/N(6)-methyltransferase family. In terms of assembly, monomer.

The enzyme catalyses a 2'-deoxyadenosine in DNA + S-adenosyl-L-methionine = an N(6)-methyl-2'-deoxyadenosine in DNA + S-adenosyl-L-homocysteine + H(+). In terms of biological role, a gamma subtype methylase, recognizes the double-stranded sequence 5'-GTMKAC-3', methylates A-5 on both strands, and protects the DNA from cleavage by the AccI endonuclease. The sequence is that of Type II methyltransferase M.AccI (accIM) from Acinetobacter calcoaceticus.